We begin with the raw amino-acid sequence, 76 residues long: Pigment-dispersing hormone A peptides (76 aa).

Residues 1 to 20 (MRSAMVVLVLVAMVAVFTRA) form the signal peptide. An Alanine amide modification is found at alanine 73.

This sequence belongs to the arthropod PDH family. As to expression, optical ganglia of the eyestalk.

It is found in the secreted. The pigment-dispersing hormone causes the migration of the distal retinal pigment into the proximal end of the pigment chromatophore cells and thus decreases the amount of light entering the retinulas. May also function as a neurotransmitter and/or neuromodulator. This Faxonius limosus (Spinycheek crayfish) protein is Pigment-dispersing hormone A peptides.